The primary structure comprises 1003 residues: Translation initiation factor IF-2 (1003 aa).

The segment at 36-392 is disordered; sequence SSTIEPPVVK…RQKRNEYESM (357 aa). Residues 62–151 are compositionally biased toward low complexity; the sequence is AAKPAAAKPA…PKPAAAAKPA (90 aa). Pro residues-rich tracts occupy residues 178 to 190 and 213 to 230; these read DGMPRPMGKPAPK and PRPGGGPRPGGGPRPGGG. Composition is skewed to gly residues over residues 231–243 and 255–271; these read PRPQGQGRPGGQR and GNRGGQRQGAGAGGPRP. Positions 273 to 286 are enriched in low complexity; that stretch reads GGPRPQGGSRPQGG. The segment covering 329–372 has biased composition (gly residues); it reads GKGGRGGQAGGGAGGGFNRGGGTGGGAGRGGRRGGTAGAFGRPG. Residues 376 to 385 are compositionally biased toward basic residues; sequence RRGRKSKRQK. The tr-type G domain maps to 498–670; the sequence is KRPPVVTVMG…VCLTADAELD (173 aa). The tract at residues 507–514 is G1; the sequence is GHVDHGKT. 507–514 contacts GTP; sequence GHVDHGKT. The tract at residues 532-536 is G2; it reads GITQG. The segment at 557–560 is G3; the sequence is DTPG. GTP-binding positions include 557 to 561 and 611 to 614; these read DTPGH and NKID. The tract at residues 611–614 is G4; the sequence is NKID. Positions 647-649 are G5; sequence SAK.

It belongs to the TRAFAC class translation factor GTPase superfamily. Classic translation factor GTPase family. IF-2 subfamily.

Its subcellular location is the cytoplasm. Its function is as follows. One of the essential components for the initiation of protein synthesis. Protects formylmethionyl-tRNA from spontaneous hydrolysis and promotes its binding to the 30S ribosomal subunits. Also involved in the hydrolysis of GTP during the formation of the 70S ribosomal complex. The chain is Translation initiation factor IF-2 from Corynebacterium glutamicum (strain R).